A 117-amino-acid chain; its full sequence is Large ribosomal subunit protein bL20c (117 aa).

The protein belongs to the bacterial ribosomal protein bL20 family.

The protein resides in the plastid. Its subcellular location is the chloroplast. Functionally, binds directly to 23S ribosomal RNA and is necessary for the in vitro assembly process of the 50S ribosomal subunit. It is not involved in the protein synthesizing functions of that subunit. This chain is Large ribosomal subunit protein bL20c, found in Buxus microphylla (Littleleaf boxwood).